Here is a 470-residue protein sequence, read N- to C-terminus: FRIGIDA-like protein 1 (470 aa).

A coiled-coil region spans residues 336-369 (KDQNLESEFTQEKVEERVEELEKNKALRKRNTTN). Residues 355–400 (ELEKNKALRKRNTTNPPKQEPQQKGKKRTRDCKNGSQVPVPSQQLL) are disordered. Residues 388-400 (NGSQVPVPSQQLL) are compositionally biased toward polar residues.

This sequence belongs to the Frigida family. As to quaternary structure, component of the transcription activator complex FRI-C composed of FRI, FRL1, SUF4, FLX and FES1. Interacts with FRI and SUF4. Expressed during seed development and in dry seed. Preferentially expressed in the chalazal endosperm during early stages of seed development.

Its function is as follows. Required for FRI-mediated up-regulation of FLC transcripts, but not redundant with FRI and only partially redundant with FRL2. Required for the stabilization of the FRI-C complex. The protein is FRIGIDA-like protein 1 (FRL1) of Arabidopsis thaliana (Mouse-ear cress).